A 50-amino-acid chain; its full sequence is Small ribosomal subunit protein eS31 (50 aa).

Zn(2+)-binding residues include cysteine 22, cysteine 25, cysteine 40, and cysteine 43. The C4-type zinc finger occupies 22 to 43; sequence CPRCGPGVFMADHGDRWACGKC.

Belongs to the eukaryotic ribosomal protein eS31 family. Part of the 30S ribosomal subunit. Zn(2+) serves as cofactor.

This chain is Small ribosomal subunit protein eS31, found in Pyrococcus horikoshii (strain ATCC 700860 / DSM 12428 / JCM 9974 / NBRC 100139 / OT-3).